Reading from the N-terminus, the 175-residue chain is MGKIFFYEERNFQGRHYECGSDYSDLSSYFNRCNSIRVEGGNWILYEHPSYKGNQYYLWKGEYPDFQRWMGFNDSIRSCRFLPNYQGQYKMRIYERGDYQGQMMEFFDDCPNTYERFNFHDIHSCNVFDGHWMFYEEPNYRGRQYYLRPGEYRRYNDWGASSPRIGSFRRVYHRF.

Beta/gamma crystallin 'Greek key' domains are found at residues 2 to 40 and 41 to 83; these read GKIF…RVEG and GNWI…RFLP. A connecting peptide region spans residues 84–88; it reads NYQGQ. Beta/gamma crystallin 'Greek key' domains lie at 89–129 and 130–172; these read YKMR…NVFD and GHWM…RRVY.

The protein belongs to the beta/gamma-crystallin family. In terms of assembly, monomer.

Its function is as follows. Crystallins are the dominant structural components of the vertebrate eye lens. This Xenopus laevis (African clawed frog) protein is Gamma-crystallin-1 (cryg1).